Consider the following 224-residue polypeptide: MKFPVLILNFKAYAEAAGRRAVEIAKAAERVAKELGVNIAVAPNHLELALVAQSVEIPVYAQGVDVESPGAHTAHVALGNLKEAGAAGVILNHSEAPLRLNELARYVGKARELGLDVVVCAPDPTTSLAAAALGPHAVAVEPPELIGTGRAVSRYKPETVVQTVQLVAKHFADVAVITGAGIESGEDVEAALRLGTRGVLLASAAVKAKDHYQKIMELAKPLLK.

9-11 (NFK) contacts substrate. His-93 acts as the Electrophile in catalysis. The active-site Proton acceptor is Glu-141. Residues Ile-146, Gly-181, and 202 to 203 (AS) each bind substrate.

It belongs to the triosephosphate isomerase family. Homotetramer; dimer of dimers.

It is found in the cytoplasm. The catalysed reaction is D-glyceraldehyde 3-phosphate = dihydroxyacetone phosphate. It functions in the pathway carbohydrate biosynthesis; gluconeogenesis. The protein operates within carbohydrate degradation; glycolysis; D-glyceraldehyde 3-phosphate from glycerone phosphate: step 1/1. Involved in the gluconeogenesis. Catalyzes stereospecifically the conversion of dihydroxyacetone phosphate (DHAP) to D-glyceraldehyde-3-phosphate (G3P). The chain is Triosephosphate isomerase from Pyrobaculum arsenaticum (strain DSM 13514 / JCM 11321 / PZ6).